We begin with the raw amino-acid sequence, 660 residues long: MTAIPVKKKVQVSFVIRDEKEPMHRSGVNCLQYDAQTGRLFSGGSDTIIRIWKSPDRKDDSGSSYSVGGKTRVRRDLHLQSMEHHTDWVNDIVLCCGVISASSDTTVKVWNAQKGFCMSTLRTHRDYVRALAYARDVEMVASGGFDQLIYLWDIATLTKLTALNNTVTTSSLTGNKDSIYSLATNPSGTVVISGSTEKVLRVFDPRACQKLMKLRGHTDNVKAVVVNRDGTQCISASSDGTIKLWSIGQQCCISSLKCHSESVWALQVDSNFSCVYSGGRDKRIFRTAINDFKTAQLMFIEDAPVQRLQLIDSESRFIWTATWNSSIKRWPLPSDAQISVEIKSDQYGETIPSIHEPDLTIPGAASIRQHVVLNDKRHIVTKDTDDNVAMWDVLKGRKVCDHGKRPMEEVIKDHFKKVFVPSWFTVDLKSGMLQITLDESDFFSAWVSAKDAGFPNIQNDTKINYGGMLLRALFEHWSRSFSDVDEESPTHRFNSVPGHTPLILCESTGRPIFRLMIRDAAHETESQMLSDFVPPWVLDVVERNQLPKFNKMPFFLLPHLSLGIKTPKKDRLSATEMLQVRKVMEHVYEKILNVNDASYSENGIPSAAQMLSPSLQANIEERVELYCQDQKLDPEMDLRTVKHFIWKQGGDLMLYYKPIR.

WD repeat units lie at residues M23–H78, H84–T120, T123–A162, G174–K213, G216–S255, C258–L297, I300–E341, and P362–D401.

The protein belongs to the WD repeat WDR48 family.

Regulator of deubiquitinating complexes. Activates deubiquitination by increasing the catalytic turnover without increasing the affinity of deubiquitinating enzymes for the substrate. In Brugia malayi (Filarial nematode worm), this protein is WD repeat-containing protein 48 homolog.